Reading from the N-terminus, the 423-residue chain is Putative competence-damage inducible protein (423 aa).

It belongs to the CinA family.

In Streptococcus pyogenes serotype M12 (strain MGAS2096), this protein is Putative competence-damage inducible protein.